Consider the following 522-residue polypeptide: Maturase K (522 aa).

Belongs to the intron maturase 2 family. MatK subfamily.

The protein localises to the plastid. It localises to the chloroplast. Functionally, usually encoded in the trnK tRNA gene intron. Probably assists in splicing its own and other chloroplast group II introns. The protein is Maturase K of Watsonia angusta.